Consider the following 217-residue polypeptide: Octanoyltransferase (217 aa).

In terms of domain architecture, BPL/LPL catalytic spans 32–207 (SESHDELWIV…TFSQLLGYQH (176 aa)). Substrate-binding positions include 71 to 78 (RGGQVTYH), 138 to 140 (SLG), and 151 to 153 (GLA). Cysteine 169 (acyl-thioester intermediate) is an active-site residue.

This sequence belongs to the LipB family.

It is found in the cytoplasm. The enzyme catalyses octanoyl-[ACP] + L-lysyl-[protein] = N(6)-octanoyl-L-lysyl-[protein] + holo-[ACP] + H(+). Its pathway is protein modification; protein lipoylation via endogenous pathway; protein N(6)-(lipoyl)lysine from octanoyl-[acyl-carrier-protein]: step 1/2. Functionally, catalyzes the transfer of endogenously produced octanoic acid from octanoyl-acyl-carrier-protein onto the lipoyl domains of lipoate-dependent enzymes. Lipoyl-ACP can also act as a substrate although octanoyl-ACP is likely to be the physiological substrate. The polypeptide is Octanoyltransferase (Shewanella baltica (strain OS223)).